The sequence spans 170 residues: Peptide deformylase (170 aa).

The Fe cation site is built by Cys93 and His135. Residue Glu136 is part of the active site. His139 is a Fe cation binding site.

Belongs to the polypeptide deformylase family. Fe(2+) serves as cofactor.

It catalyses the reaction N-terminal N-formyl-L-methionyl-[peptide] + H2O = N-terminal L-methionyl-[peptide] + formate. Removes the formyl group from the N-terminal Met of newly synthesized proteins. Requires at least a dipeptide for an efficient rate of reaction. N-terminal L-methionine is a prerequisite for activity but the enzyme has broad specificity at other positions. This Syntrophobacter fumaroxidans (strain DSM 10017 / MPOB) protein is Peptide deformylase.